The sequence spans 456 residues: Bifunctional protein GlmU (456 aa).

The segment at M1–R229 is pyrophosphorylase. UDP-N-acetyl-alpha-D-glucosamine contacts are provided by residues L11–G14, K25, Q76, G81–T82, Y103–D105, G140, E154, N169, and N227. A Mg(2+)-binding site is contributed by D105. Residue N227 coordinates Mg(2+). A linker region spans residues L230 to A250. Residues G251–K456 are N-acetyltransferase. Positions 333 and 351 each coordinate UDP-N-acetyl-alpha-D-glucosamine. H363 acts as the Proton acceptor in catalysis. UDP-N-acetyl-alpha-D-glucosamine-binding residues include Y366 and N377. Acetyl-CoA is bound by residues A380, N386 to Y387, S405, A423, and R440.

It in the N-terminal section; belongs to the N-acetylglucosamine-1-phosphate uridyltransferase family. In the C-terminal section; belongs to the transferase hexapeptide repeat family. In terms of assembly, homotrimer. Requires Mg(2+) as cofactor.

It is found in the cytoplasm. The catalysed reaction is alpha-D-glucosamine 1-phosphate + acetyl-CoA = N-acetyl-alpha-D-glucosamine 1-phosphate + CoA + H(+). The enzyme catalyses N-acetyl-alpha-D-glucosamine 1-phosphate + UTP + H(+) = UDP-N-acetyl-alpha-D-glucosamine + diphosphate. Its pathway is nucleotide-sugar biosynthesis; UDP-N-acetyl-alpha-D-glucosamine biosynthesis; N-acetyl-alpha-D-glucosamine 1-phosphate from alpha-D-glucosamine 6-phosphate (route II): step 2/2. It participates in nucleotide-sugar biosynthesis; UDP-N-acetyl-alpha-D-glucosamine biosynthesis; UDP-N-acetyl-alpha-D-glucosamine from N-acetyl-alpha-D-glucosamine 1-phosphate: step 1/1. It functions in the pathway bacterial outer membrane biogenesis; LPS lipid A biosynthesis. Functionally, catalyzes the last two sequential reactions in the de novo biosynthetic pathway for UDP-N-acetylglucosamine (UDP-GlcNAc). The C-terminal domain catalyzes the transfer of acetyl group from acetyl coenzyme A to glucosamine-1-phosphate (GlcN-1-P) to produce N-acetylglucosamine-1-phosphate (GlcNAc-1-P), which is converted into UDP-GlcNAc by the transfer of uridine 5-monophosphate (from uridine 5-triphosphate), a reaction catalyzed by the N-terminal domain. The sequence is that of Bifunctional protein GlmU from Pectobacterium atrosepticum (strain SCRI 1043 / ATCC BAA-672) (Erwinia carotovora subsp. atroseptica).